The following is a 191-amino-acid chain: Small ribosomal subunit protein eS7y (191 aa).

An N-acetylmethionine modification is found at methionine 1. Residues threonine 17–valine 50 are a coiled coil.

The protein belongs to the eukaryotic ribosomal protein eS7 family.

The protein is Small ribosomal subunit protein eS7y (RPS7B) of Arabidopsis thaliana (Mouse-ear cress).